The chain runs to 392 residues: Cellobiose 2-epimerase (392 aa).

This sequence belongs to the cellobiose 2-epimerase family.

It catalyses the reaction D-cellobiose = beta-D-glucosyl-(1-&gt;4)-D-mannopyranose. Its function is as follows. Catalyzes the reversible epimerization of cellobiose to 4-O-beta-D-glucopyranosyl-D-mannose (Glc-Man). Can also epimerize cellotriose to Glc-Glc-Man, cellotetraose to Glc-Glc-Glc-Man, lactose to epilactose, and mannobiose to 4-O-beta-D-mannopyranosyl-D-glucopyranose (Man-Glc). May function as a mannobiose 2-epimerase in vivo and be involved in a mannan catabolic pathway which feeds into glycolysis. This chain is Cellobiose 2-epimerase (bfce), found in Bacteroides fragilis (strain ATCC 25285 / DSM 2151 / CCUG 4856 / JCM 11019 / LMG 10263 / NCTC 9343 / Onslow / VPI 2553 / EN-2).